The sequence spans 506 residues: Histidine ammonia-lyase (506 aa).

The segment at residues 143 to 145 is a cross-link (5-imidazolinone (Ala-Gly)); the sequence is ASG. A 2,3-didehydroalanine (Ser) modification is found at Ser144.

It belongs to the PAL/histidase family. Contains an active site 4-methylidene-imidazol-5-one (MIO), which is formed autocatalytically by cyclization and dehydration of residues Ala-Ser-Gly.

The protein localises to the cytoplasm. It catalyses the reaction L-histidine = trans-urocanate + NH4(+). It participates in amino-acid degradation; L-histidine degradation into L-glutamate; N-formimidoyl-L-glutamate from L-histidine: step 1/3. The polypeptide is Histidine ammonia-lyase (Salmonella paratyphi C (strain RKS4594)).